We begin with the raw amino-acid sequence, 495 residues long: MSDARDNDDRVDFEEGSYSEMEDEVEEEQVEEYEEEEEEDDDDDDVGNQNAEEREVEDYGDTKGGDMEDVQEEIAEDDDNHIDIETADDDEKPPSPIDDEDREKYSHLLSLPPHGSEVFIGGLPRDVGEEDLRDLCEEIGEIFEVRLMKDRDSGDSKGYAFVAFKTKDVAQKAIEELHSKEFKGKTIRCSLSETKNRLFIGNIPKNWTEDEFRKVIEDVGPGVENIELIKDPTNTTRNRGFAFVLYYNNACADYSRQKMIDSNFKLEGNAPTVTWADPKSSPEHSAAAAQVKALYVKNIPENTSTEQLKELFQRHGEVTKIVTPPGKGGKRDFGFVHYAERSSALKAVKDTERYEVNGQPLEVVLAKPQAERKHDPSSYSYGAAPTPAPFVHPTFGGFAAAPYGAMGAGLGIAGSFSQPMIYGRGAMPTGMQMVPMLLPDGRVGYVLQQPGMPMAAAPPQRPRRNDRNNGSSGGSGRDNSHEHDGNRGGRRYRPY.

Positions 1–10 are enriched in basic and acidic residues; that stretch reads MSDARDNDDR. A disordered region spans residues 1–101; it reads MSDARDNDDR…KPPSPIDDED (101 aa). 2 stretches are compositionally biased toward acidic residues: residues 11–46 and 67–101; these read VDFE…DDDV and MEDV…DDED. RRM domains lie at 116–194, 196–278, and 292–368; these read SEVF…LSET, NRLF…WADP, and KALY…LAKP. The interval 452 to 495 is disordered; that stretch reads MPMAAAPPQRPRRNDRNNGSSGGSGRDNSHEHDGNRGGRRYRPY. A compositionally biased stretch (basic and acidic residues) spans 478-487; sequence DNSHEHDGNR.

In terms of assembly, interacts with LHP1 in the nucleus on a common set of chromatin regions. In terms of tissue distribution, predominantly expressed in vascular and meristematic tissues. Expressed throughout development in seedlings, roots, leaves, floral buds and siliques.

It is found in the nucleus. It localises to the cytoplasm. Its subcellular location is the microsome. Functionally, transcriptional activator that binds DNA on GAGA-like motif and 5'-(C/G)ACGTG(G/T)C(A/G)-3' consensus motif in the promoters of target genes. Component of ribonucleosomes, which are complexes of at least 20 other different heterogeneous nuclear ribonucleoproteins (hnRNP). hnRNP play an important role in processing of precursor mRNA in the nucleus. Required during flower development and for cell fate determination. Acts both as an antagonist and as a promoter of polycomb LHP1 gene regulation activity, depending of target genes, to regulate the transcription of stress-responsive and flowering genes. May regulate histone H3 trimethylation on lysine 27 (H3K27me3). Recognizes and binds histone H3 tails methylated at 'Lys-4' (H3K4me) and acetylated at 'Lys-9' (H3K9ac), leading to epigenetic activation. When in complex with LHP1, recognizes and binds histone H3 tails methylated at 'Lys-4' (H3K4me) and 'Lys-27' (H3K27me), mostly corresponding to stress-responsive genes. May function as a suppressor of cell-autonomous immune responses involving glucosinolates, salicylic acid (SA) and jasmonic acid (JA) pathways toward pathogenic bacteria and fungi. This chain is Heterogeneous nuclear ribonucleoprotein Q, found in Arabidopsis thaliana (Mouse-ear cress).